Consider the following 363-residue polypeptide: Fructose-bisphosphate aldolase A (363 aa).

Residue arginine 43 participates in beta-D-fructose 1,6-bisphosphate binding. Glutamate 188 (proton acceptor) is an active-site residue. Lysine 230 serves as the catalytic Schiff-base intermediate with dihydroxyacetone-P. Residues 272–274, serine 301, and arginine 304 contribute to the beta-D-fructose 1,6-bisphosphate site; that span reads SGG.

This sequence belongs to the class I fructose-bisphosphate aldolase family. As to quaternary structure, tetramer.

The catalysed reaction is beta-D-fructose 1,6-bisphosphate = D-glyceraldehyde 3-phosphate + dihydroxyacetone phosphate. It functions in the pathway carbohydrate degradation; glycolysis; D-glyceraldehyde 3-phosphate and glycerone phosphate from D-glucose: step 4/4. Its function is as follows. Plays a key role in glycolysis and gluconeogenesis. In Salmo salar (Atlantic salmon), this protein is Fructose-bisphosphate aldolase A.